The primary structure comprises 101 residues: Putative septation protein SpoVG (101 aa).

This sequence belongs to the SpoVG family.

Functionally, could be involved in septation. This chain is Putative septation protein SpoVG, found in Anaeromyxobacter dehalogenans (strain 2CP-C).